The primary structure comprises 448 residues: tRNA modification GTPase MnmE (448 aa).

Arg-22, Glu-83, and Arg-122 together coordinate (6S)-5-formyl-5,6,7,8-tetrahydrofolate. Positions Gly-219 to Lys-369 constitute a TrmE-type G domain. Asn-229 lines the K(+) pocket. GTP is bound by residues Asn-229 to Ser-234, Ser-248 to Thr-254, and Asp-273 to Gly-276. Mg(2+) is bound at residue Ser-233. Ser-248, Ile-250, and Thr-253 together coordinate K(+). Thr-254 serves as a coordination point for Mg(2+). Residue Lys-448 coordinates (6S)-5-formyl-5,6,7,8-tetrahydrofolate.

The protein belongs to the TRAFAC class TrmE-Era-EngA-EngB-Septin-like GTPase superfamily. TrmE GTPase family. In terms of assembly, homodimer. Heterotetramer of two MnmE and two MnmG subunits. The cofactor is K(+).

It is found in the cytoplasm. Its function is as follows. Exhibits a very high intrinsic GTPase hydrolysis rate. Involved in the addition of a carboxymethylaminomethyl (cmnm) group at the wobble position (U34) of certain tRNAs, forming tRNA-cmnm(5)s(2)U34. This Acholeplasma laidlawii (strain PG-8A) protein is tRNA modification GTPase MnmE.